A 327-amino-acid polypeptide reads, in one-letter code: Glycerol-3-phosphate dehydrogenase [NAD(P)+] (327 aa).

4 residues coordinate NADPH: Ser10, Phe11, Arg31, and Lys108. Sn-glycerol 3-phosphate is bound by residues Lys108, Gly136, and Ser138. Ala140 is an NADPH binding site. 5 residues coordinate sn-glycerol 3-phosphate: Lys191, Asp246, Ser256, Arg257, and Asn258. Residue Lys191 is the Proton acceptor of the active site. Arg257 contributes to the NADPH binding site. Residues Leu281 and Glu283 each contribute to the NADPH site.

It belongs to the NAD-dependent glycerol-3-phosphate dehydrogenase family.

The protein resides in the cytoplasm. It catalyses the reaction sn-glycerol 3-phosphate + NAD(+) = dihydroxyacetone phosphate + NADH + H(+). The enzyme catalyses sn-glycerol 3-phosphate + NADP(+) = dihydroxyacetone phosphate + NADPH + H(+). The protein operates within membrane lipid metabolism; glycerophospholipid metabolism. Its function is as follows. Catalyzes the reduction of the glycolytic intermediate dihydroxyacetone phosphate (DHAP) to sn-glycerol 3-phosphate (G3P), the key precursor for phospholipid synthesis. This is Glycerol-3-phosphate dehydrogenase [NAD(P)+] from Ehrlichia ruminantium (strain Gardel).